Here is a 353-residue protein sequence, read N- to C-terminus: DNA-repair protein XRCC1 (353 aa).

The segment covering 1 to 12 (MSQKRNLPSWMS) has biased composition (polar residues). The segment at 1–57 (MSQKRNLPSWMSSRDPEITPSKSHCKKPKDEGPTEEHNSRNAPSNKSEHAEPSSNTT) is disordered. The span at 28–39 (PKDEGPTEEHNS) shows a compositional bias: basic and acidic residues. In terms of domain architecture, BRCT 1 spans 58–146 (EFSKLMEGVV…KLVDIEQYLM (89 aa)). Residues 150-194 (KPWRKSSSPQDANREKREHLSKKPEKQVEKKTETRGTPSTSSKNR) are disordered. Positions 161 to 183 (ANREKREHLSKKPEKQVEKKTET) are enriched in basic and acidic residues. The segment covering 184–194 (RGTPSTSSKNR) has biased composition (polar residues). Residues 240–260 (AAEGVLTCLQDAIDSLEQKQD) are a coiled coil. The BRCT 2 domain maps to 266–347 (ELWSFVPRVV…EEEIELAYRN (82 aa)).

In terms of assembly, homodimer. Interacts with polynucleotide kinase (PNK), DNA polymerase-beta (POLB) and DNA ligase III (LIG3). Interacts with ZDP and ROS1. Binds to various forms of double-stranded DNA (e.g. methylated, unmethylated, with single-nucleotide gap flanked by 3'-phosphate or 5'-phosphate ends).

It localises to the nucleus. Functionally, corrects defective DNA strand-break repair and sister chromatid exchange following treatment with ionizing radiation and alkylating agents. Involved in DNA demethylation pathway by stimulating cytosine methylation (5-meC) excision, gap tailoring, and DNA ligation. The chain is DNA-repair protein XRCC1 from Arabidopsis thaliana (Mouse-ear cress).